The chain runs to 906 residues: Alanine--tRNA ligase (906 aa).

Residues H570, H574, C674, and H678 each contribute to the Zn(2+) site.

Belongs to the class-II aminoacyl-tRNA synthetase family. Zn(2+) is required as a cofactor.

The protein localises to the cytoplasm. It catalyses the reaction tRNA(Ala) + L-alanine + ATP = L-alanyl-tRNA(Ala) + AMP + diphosphate. Its function is as follows. Catalyzes the attachment of alanine to tRNA(Ala) in a two-step reaction: alanine is first activated by ATP to form Ala-AMP and then transferred to the acceptor end of tRNA(Ala). Also edits incorrectly charged Ser-tRNA(Ala) and Gly-tRNA(Ala) via its editing domain. The sequence is that of Alanine--tRNA ligase from Ureaplasma parvum serovar 3 (strain ATCC 27815 / 27 / NCTC 11736).